Here is a 145-residue protein sequence, read N- to C-terminus: Putative pre-16S rRNA nuclease (145 aa).

The protein belongs to the YqgF nuclease family.

The protein resides in the cytoplasm. Functionally, could be a nuclease involved in processing of the 5'-end of pre-16S rRNA. The polypeptide is Putative pre-16S rRNA nuclease (Tropheryma whipplei (strain Twist) (Whipple's bacillus)).